A 551-amino-acid polypeptide reads, in one-letter code: Membrane protein insertase YidC (551 aa).

The chain crosses the membrane as a helical span at residues 6 to 26 (YFLWGALFISGYLLFLQWSQD). The span at 34 to 50 (SVAQSTQSQSETNSQMS) shows a compositional bias: low complexity. The interval 34–68 (SVAQSTQSQSETNSQMSDDLPMATQSTTEANAEIP) is disordered. Positions 56–68 (ATQSTTEANAEIP) are enriched in polar residues. The next 5 helical transmembrane spans lie at 340–360 (TVDY…LTLI), 363–383 (FVIN…AIFF), 433–453 (LGGC…YWVL), 464–484 (FFLW…PILM), and 509–529 (IMPV…VLYW).

This sequence belongs to the OXA1/ALB3/YidC family. Type 1 subfamily. Interacts with the Sec translocase complex via SecD. Specifically interacts with transmembrane segments of nascent integral membrane proteins during membrane integration.

The protein localises to the cell inner membrane. Functionally, required for the insertion and/or proper folding and/or complex formation of integral membrane proteins into the membrane. Involved in integration of membrane proteins that insert both dependently and independently of the Sec translocase complex, as well as at least some lipoproteins. Aids folding of multispanning membrane proteins. The chain is Membrane protein insertase YidC from Marinomonas sp. (strain MWYL1).